The primary structure comprises 249 residues: MRRGRSRPAGAAPAALLLPLLLLLPLTGCDRLAAAPAEHAAAAGDPAQDADRGRRLPPVVDHVRTDDPVVFLTYDDGAERDPAFVGLIRERRLPVTLFLTDTVAGPAYGDLARLRPFGASLQNHTLDHRSLRGLPHAGQRAEICGQQTKLRSRFGVRAHLFRPPHGTYDTTTLRAAADCGITALVLWRATLDADGALTYTRGDHRLHPGDIVAVDPDHPTAANLAARTERLLETIEEQGLRVGNLENYL.

The N-terminal stretch at 1–43 (MRRGRSRPAGAAPAALLLPLLLLLPLTGCDRLAAAPAEHAAAA) is a signal peptide. Residues 40–59 (AAAAGDPAQDADRGRRLPPV) are disordered. The 176-residue stretch at 68-243 (PVVFLTYDDG…TIEEQGLRVG (176 aa)) folds into the NodB homology domain.

This is an uncharacterized protein from Streptomyces coelicolor (strain ATCC BAA-471 / A3(2) / M145).